We begin with the raw amino-acid sequence, 166 residues long: Co-chaperone protein HscB homolog (166 aa).

A J domain is found at 3-75 (QYFTLFRIEP…IDRAAYLLKT (73 aa)).

Belongs to the HscB family. In terms of assembly, interacts with HscA and stimulates its ATPase activity.

In terms of biological role, co-chaperone involved in the maturation of iron-sulfur cluster-containing proteins. Seems to help targeting proteins to be folded toward HscA. The protein is Co-chaperone protein HscB homolog of Neisseria meningitidis serogroup C (strain 053442).